Consider the following 305-residue polypeptide: Peroxisome biogenesis factor 2 (305 aa).

Residues 1–15 (MAAREESTQSANRVL) lie on the Peroxisomal matrix side of the membrane. A helical transmembrane segment spans residues 16 to 42 (RISQLDALELNKALEQLVWSQFTQCFH). Over 43 to 48 (GFKPGL) the chain is Cytoplasmic. Residues 49–74 (LARFEPEVKAFLWLFLWRFTIYSKNA) form a helical membrane-spanning segment. At 75–98 (TVGQSVLNIQHKNDSSPNPVYQPP) the chain is on the peroxisomal matrix side. The helical transmembrane segment at 99-125 (SKNQKLLYAVCTIGGRWLEERCYDLFR) threads the bilayer. The Cytoplasmic segment spans residues 126–133 (NRHLASFG). Residues 134–160 (KAKQCMNFVVGLLKLGELMNFLIFLQK) form a helical membrane-spanning segment. The Peroxisomal matrix segment spans residues 161 to 187 (GKFATLTERLLGIHSVFCKPQNMREVG). Residues 188–211 (FEYMNRELLWHGFAEFLIFLLPLI) form a helical membrane-spanning segment. The Cytoplasmic portion of the chain corresponds to 212–305 (NIQKLKAKLS…GIQMSEVNAL (94 aa)). Zn(2+) contacts are provided by C244, C247, C259, H261, C264, C267, C280, and C283. The segment at 244 to 284 (CALCGEWPTMPHTIGCEHVFCYYCVKSSFLFDIYFTCPKCG) adopts an RING-type zinc-finger fold.

The protein belongs to the pex2/pex10/pex12 family. As to quaternary structure, component of the PEX2-PEX10-PEX12 retrotranslocation channel, composed of PEX2, PEX10 and PEX12. Forms intramolecular and intermolecular disulfide bonds in response to reactive oxygen species (ROS), promoting higher stability.

The protein localises to the peroxisome membrane. The catalysed reaction is [E2 ubiquitin-conjugating enzyme]-S-ubiquitinyl-L-cysteine + [acceptor protein]-L-cysteine = [E2 ubiquitin-conjugating enzyme]-L-cysteine + [acceptor protein]-S-ubiquitinyl-L-cysteine.. The enzyme catalyses S-ubiquitinyl-[E2 ubiquitin-conjugating enzyme]-L-cysteine + [acceptor protein]-L-lysine = [E2 ubiquitin-conjugating enzyme]-L-cysteine + N(6)-ubiquitinyl-[acceptor protein]-L-lysine.. Its pathway is protein modification; protein ubiquitination. Its function is as follows. E3 ubiquitin-protein ligase component of a retrotranslocation channel required for peroxisome organization by mediating export of the PEX5 receptor from peroxisomes to the cytosol, thereby promoting PEX5 recycling. The retrotranslocation channel is composed of PEX2, PEX10 and PEX12; each subunit contributing transmembrane segments that coassemble into an open channel that specifically allows the passage of PEX5 through the peroxisomal membrane. PEX2 also regulates peroxisome organization by acting as a E3 ubiquitin-protein ligase. PEX2 ubiquitinates PEX5 during its passage through the retrotranslocation channel: catalyzes monoubiquitination of PEX5 at 'Cys-11', a modification that acts as a signal for PEX5 extraction into the cytosol. Required for pexophagy in response to starvation by mediating ubiquitination of peroxisomal proteins, such as PEX5 and ABCD3/PMP70. Also involved in the response to reactive oxygen species (ROS) by mediating 'Lys-48'-linked polyubiquitination and subsequent degradation of PNPLA2/ATGL, thereby regulating lipolysis. The chain is Peroxisome biogenesis factor 2 from Mus musculus (Mouse).